A 606-amino-acid polypeptide reads, in one-letter code: Isocitrate dehydrogenase kinase/phosphatase (606 aa).

Residues 354 to 360 and lysine 375 contribute to the ATP site; that span reads APGFKGT. The active site involves aspartate 414.

It belongs to the AceK family.

It is found in the cytoplasm. The enzyme catalyses L-seryl-[isocitrate dehydrogenase] + ATP = O-phospho-L-seryl-[isocitrate dehydrogenase] + ADP + H(+). In terms of biological role, bifunctional enzyme which can phosphorylate or dephosphorylate isocitrate dehydrogenase (IDH) on a specific serine residue. This is a regulatory mechanism which enables bacteria to bypass the Krebs cycle via the glyoxylate shunt in response to the source of carbon. When bacteria are grown on glucose, IDH is fully active and unphosphorylated, but when grown on acetate or ethanol, the activity of IDH declines drastically concomitant with its phosphorylation. This chain is Isocitrate dehydrogenase kinase/phosphatase, found in Rhodopseudomonas palustris (strain BisB5).